The primary structure comprises 205 residues: Thiamine-phosphate synthase (205 aa).

Residues 35-39 (QYRDK) and N67 each bind 4-amino-2-methyl-5-(diphosphooxymethyl)pyrimidine. Mg(2+) contacts are provided by D68 and D86. T105 is a 4-amino-2-methyl-5-(diphosphooxymethyl)pyrimidine binding site. 132–134 (SLT) lines the 2-[(2R,5Z)-2-carboxy-4-methylthiazol-5(2H)-ylidene]ethyl phosphate pocket. K135 contacts 4-amino-2-methyl-5-(diphosphooxymethyl)pyrimidine. Position 162 (G162) interacts with 2-[(2R,5Z)-2-carboxy-4-methylthiazol-5(2H)-ylidene]ethyl phosphate.

Belongs to the thiamine-phosphate synthase family. The cofactor is Mg(2+).

The catalysed reaction is 2-[(2R,5Z)-2-carboxy-4-methylthiazol-5(2H)-ylidene]ethyl phosphate + 4-amino-2-methyl-5-(diphosphooxymethyl)pyrimidine + 2 H(+) = thiamine phosphate + CO2 + diphosphate. It carries out the reaction 2-(2-carboxy-4-methylthiazol-5-yl)ethyl phosphate + 4-amino-2-methyl-5-(diphosphooxymethyl)pyrimidine + 2 H(+) = thiamine phosphate + CO2 + diphosphate. It catalyses the reaction 4-methyl-5-(2-phosphooxyethyl)-thiazole + 4-amino-2-methyl-5-(diphosphooxymethyl)pyrimidine + H(+) = thiamine phosphate + diphosphate. It participates in cofactor biosynthesis; thiamine diphosphate biosynthesis; thiamine phosphate from 4-amino-2-methyl-5-diphosphomethylpyrimidine and 4-methyl-5-(2-phosphoethyl)-thiazole: step 1/1. In terms of biological role, condenses 4-methyl-5-(beta-hydroxyethyl)thiazole monophosphate (THZ-P) and 2-methyl-4-amino-5-hydroxymethyl pyrimidine pyrophosphate (HMP-PP) to form thiamine monophosphate (TMP). This Pseudomonas syringae pv. syringae (strain B728a) protein is Thiamine-phosphate synthase.